Consider the following 137-residue polypeptide: Immunoglobulin domain-containing protein oig-1 (137 aa).

The first 23 residues, 1 to 23, serve as a signal peptide directing secretion; it reads MFSELRILRDILLLCFLSVGINA. The 93-residue stretch at 41 to 133 folds into the Ig-like C2-type domain; it reads PKISRSSYFK…KGSRVKKFLT (93 aa). An intrachain disulfide couples Cys63 to Cys118.

Expressed in DD and VD GABAergic motor neurons. Expressed in a subset of head neurons including M2 motor neurons in the pharynx. Expressed in coelomocytes.

The protein resides in the membrane. It localises to the secreted. The protein localises to the extracellular space. It is found in the cell projection. Its subcellular location is the dendrite. The protein resides in the axon. In terms of biological role, plays a role in neural development, where it temporally regulates synapse formation in the D-type inhibitory GABAergic motor neurons, dorsal D (DD) and ventral D (VD) motor neurons. Controls the translocation of postsynaptic proteins, such as the acetylcholine receptor subunit acr-12, and presynaptic proteins, such as snb-1, along nerve cords to prevent premature synapse remodeling/formation. The protein is Immunoglobulin domain-containing protein oig-1 of Caenorhabditis elegans.